A 505-amino-acid polypeptide reads, in one-letter code: Apolipoprotein N-acyltransferase (505 aa).

The next 6 helical transmembrane spans lie at 23-43 (LLAL…AVLY), 58-78 (GWWF…VSMN), 85-105 (PLLA…FFAL), 125-145 (LCFA…LTGF), 162-182 (LAPL…AALL), and 192-212 (PSFL…GLAL). Residues 230–469 (IQGNVEQDLK…QAVLYGEVVP (240 aa)) form the CN hydrolase domain. The active-site Proton acceptor is the glutamate 269. Lysine 329 is an active-site residue. The Nucleophile role is filled by cysteine 381. A helical transmembrane segment spans residues 482-502 (WPLAIVCALLLGWALLAGRIA).

Belongs to the CN hydrolase family. Apolipoprotein N-acyltransferase subfamily.

Its subcellular location is the cell inner membrane. It catalyses the reaction N-terminal S-1,2-diacyl-sn-glyceryl-L-cysteinyl-[lipoprotein] + a glycerophospholipid = N-acyl-S-1,2-diacyl-sn-glyceryl-L-cysteinyl-[lipoprotein] + a 2-acyl-sn-glycero-3-phospholipid + H(+). Its pathway is protein modification; lipoprotein biosynthesis (N-acyl transfer). Catalyzes the phospholipid dependent N-acylation of the N-terminal cysteine of apolipoprotein, the last step in lipoprotein maturation. The chain is Apolipoprotein N-acyltransferase from Pseudomonas putida (strain ATCC 47054 / DSM 6125 / CFBP 8728 / NCIMB 11950 / KT2440).